The chain runs to 83 residues: Cytochrome b559 subunit alpha (83 aa).

A helical transmembrane segment spans residues 21 to 35 (VIHSITIPSLFIAGW). Heme is bound at residue histidine 23.

It belongs to the PsbE/PsbF family. In terms of assembly, heterodimer of an alpha subunit and a beta subunit. PSII is composed of 1 copy each of membrane proteins PsbA, PsbB, PsbC, PsbD, PsbE, PsbF, PsbH, PsbI, PsbJ, PsbK, PsbL, PsbM, PsbT, PsbX, PsbY, PsbZ, Psb30/Ycf12, at least 3 peripheral proteins of the oxygen-evolving complex and a large number of cofactors. It forms dimeric complexes. Heme b serves as cofactor.

Its subcellular location is the plastid. It is found in the chloroplast thylakoid membrane. Functionally, this b-type cytochrome is tightly associated with the reaction center of photosystem II (PSII). PSII is a light-driven water:plastoquinone oxidoreductase that uses light energy to abstract electrons from H(2)O, generating O(2) and a proton gradient subsequently used for ATP formation. It consists of a core antenna complex that captures photons, and an electron transfer chain that converts photonic excitation into a charge separation. This chain is Cytochrome b559 subunit alpha, found in Mesembryanthemum crystallinum (Common ice plant).